The chain runs to 237 residues: ATP synthase subunit a (237 aa).

5 helical membrane passes run 18–38 (LTLLAMSLLAVLLVFAFVYWA), 77–97 (SLFLFSLFLFLVVANNLGLMA), 114–134 (NIAFDLSMSFLITLICHVEGI), 167–187 (LALRIYGNIFAGEVLSGLLVT), and 208–230 (AFSVFISCVQAYVFTMLTSMYLG).

This sequence belongs to the ATPase A chain family. As to quaternary structure, F-type ATPases have 2 components, CF(1) - the catalytic core - and CF(0) - the membrane proton channel. CF(1) has five subunits: alpha(3), beta(3), gamma(1), delta(1), epsilon(1). CF(0) has three main subunits: a(1), b(2) and c(9-12). The alpha and beta chains form an alternating ring which encloses part of the gamma chain. CF(1) is attached to CF(0) by a central stalk formed by the gamma and epsilon chains, while a peripheral stalk is formed by the delta and b chains.

Its subcellular location is the cell membrane. In terms of biological role, key component of the proton channel; it plays a direct role in the translocation of protons across the membrane. This is ATP synthase subunit a from Streptococcus gordonii (strain Challis / ATCC 35105 / BCRC 15272 / CH1 / DL1 / V288).